We begin with the raw amino-acid sequence, 75 residues long: UPF0291 protein Teth39_0326 (75 aa).

The protein belongs to the UPF0291 family.

Its subcellular location is the cytoplasm. This Thermoanaerobacter pseudethanolicus (strain ATCC 33223 / 39E) (Clostridium thermohydrosulfuricum) protein is UPF0291 protein Teth39_0326.